A 464-amino-acid chain; its full sequence is Tyrosine--tRNA ligase, mitochondrial (464 aa).

Residue Y61 participates in L-tyrosine binding. D65 provides a ligand contact to ATP. The 'HIGH' region motif lies at 66–75; sequence PTADSLHVGN. L-tyrosine-binding residues include D105, Y209, Q213, D216, and Q235. The 'KMSKS' region signature appears at 270-274; that stretch reads KFGKS. K273 provides a ligand contact to ATP.

It belongs to the class-I aminoacyl-tRNA synthetase family. In terms of assembly, homodimer.

It is found in the mitochondrion matrix. It catalyses the reaction tRNA(Tyr) + L-tyrosine + ATP = L-tyrosyl-tRNA(Tyr) + AMP + diphosphate + H(+). Functionally, catalyzes the attachment of tyrosine to tRNA(Tyr) in a two-step reaction: tyrosine is first activated by ATP to form Tyr-AMP and then transferred to the acceptor end of tRNA(Tyr). In Drosophila melanogaster (Fruit fly), this protein is Tyrosine--tRNA ligase, mitochondrial.